Consider the following 209-residue polypeptide: Protein bli-3 (209 aa).

Residues Met1–Thr11 show a composition bias toward polar residues. The tract at residues Met1–Leu24 is disordered.

The protein is Protein bli-3 (bli-3) of Neurospora crassa (strain ATCC 24698 / 74-OR23-1A / CBS 708.71 / DSM 1257 / FGSC 987).